Here is a 1034-residue protein sequence, read N- to C-terminus: Multidrug export protein AcrF (1034 aa).

At 1–9 the chain is on the cytoplasmic side; the sequence is MANFFIRRP. A helical membrane pass occupies residues 10-28; it reads IFAWVLAIILMMAGALAIL. Topologically, residues 29 to 339 are periplasmic; the sequence is QLPVAQYPTI…TPFVQLSIHE (311 aa). The chain crosses the membrane as a helical span at residues 340–359; the sequence is VVKTLFEAIMLVFLVMYLFL. At 360-365 the chain is on the cytoplasmic side; it reads QNMRAT. A helical transmembrane segment spans residues 366–385; the sequence is LIPTIAVPVVLLGTFAILAA. Residues 386–391 lie on the Periplasmic side of the membrane; that stretch reads FGYSIN. Residues 392–413 form a helical membrane-spanning segment; it reads TLTMFGMVLAIGLLVDDAIVVV. Topologically, residues 414 to 441 are cytoplasmic; that stretch reads ENVERVMMEDKLPPKEATEKSMSQIQGA. The chain crosses the membrane as a helical span at residues 442–460; the sequence is LVGIAMVLSAVFIPMAFFG. Over 461–473 the chain is Periplasmic; sequence GSTGAIYRQFSIT. A helical membrane pass occupies residues 474-496; sequence IVSAMALSVLVALILTPALCATL. At 497-537 the chain is on the cytoplasmic side; it reads LKPVSAEHHENKGGFFGWFNTTFDHSVNHYTNSVGKILGST. A helical membrane pass occupies residues 538–556; sequence GRYLLIYALIVAGMVVLFL. Residues 557–871 are Periplasmic-facing; it reads RLPSSFLPEE…SYQERLSGNQ (315 aa). The helical transmembrane segment at 872–891 threads the bilayer; that stretch reads APALVAISFVVVFLCLAALY. The Cytoplasmic portion of the chain corresponds to 892 to 897; the sequence is ESWSIP. The chain crosses the membrane as a helical span at residues 898–917; the sequence is VSVMLVVPLGIVGVLLAATL. Residues 918 to 923 are Periplasmic-facing; the sequence is FNQKND. Residues 924–945 traverse the membrane as a helical segment; that stretch reads VYFMVGLLTTIGLSAKNAILIV. At 946–973 the chain is on the cytoplasmic side; that stretch reads EFAKDLMEKEGKGVVEATLMAVRMRLRP. Residues 974-992 traverse the membrane as a helical segment; that stretch reads ILMTSLAFILGVLPLAISN. Residues 993 to 1005 are Periplasmic-facing; it reads GAGSGAQNAVGIG. The helical transmembrane segment at 1006 to 1028 threads the bilayer; it reads VMGGMVSATLLAIFFVPVFFVVI. Residues 1029 to 1034 lie on the Cytoplasmic side of the membrane; that stretch reads RRCFKG.

The protein belongs to the resistance-nodulation-cell division (RND) (TC 2.A.6) family. In terms of assembly, part of the tripartite efflux system AcrEF-TolC, which is composed of an inner membrane transporter, AcrF, a periplasmic membrane fusion protein, AcrE, and an outer membrane component, TolC. The complex forms a large protein conduit and can translocate molecules across both the inner and outer membranes.

It is found in the cell inner membrane. Its function is as follows. Part of the tripartite efflux system AcrEF-TolC. Involved in the efflux of indole and organic solvents. The sequence is that of Multidrug export protein AcrF (acrF) from Escherichia coli (strain K12).